Here is a 290-residue protein sequence, read N- to C-terminus: Light-independent protochlorophyllide reductase iron-sulfur ATP-binding protein (290 aa).

Residues 10–15 (GIGKST) and Lys-39 contribute to the ATP site. Residue Ser-14 participates in Mg(2+) binding. Cys-95 and Cys-129 together coordinate [4Fe-4S] cluster. Position 180–181 (180–181 (NR)) interacts with ATP.

This sequence belongs to the NifH/BchL/ChlL family. Homodimer. Protochlorophyllide reductase is composed of three subunits; ChlL, ChlN and ChlB. [4Fe-4S] cluster serves as cofactor.

The protein resides in the plastid. Its subcellular location is the chloroplast. The enzyme catalyses chlorophyllide a + oxidized 2[4Fe-4S]-[ferredoxin] + 2 ADP + 2 phosphate = protochlorophyllide a + reduced 2[4Fe-4S]-[ferredoxin] + 2 ATP + 2 H2O. It participates in porphyrin-containing compound metabolism; chlorophyll biosynthesis (light-independent). Its function is as follows. Component of the dark-operative protochlorophyllide reductase (DPOR) that uses Mg-ATP and reduced ferredoxin to reduce ring D of protochlorophyllide (Pchlide) to form chlorophyllide a (Chlide). This reaction is light-independent. The L component serves as a unique electron donor to the NB-component of the complex, and binds Mg-ATP. In Angiopteris evecta (Mule's foot fern), this protein is Light-independent protochlorophyllide reductase iron-sulfur ATP-binding protein.